The following is a 129-amino-acid chain: Phosphoribosyl-AMP cyclohydrolase (129 aa).

Residue D76 coordinates Mg(2+). C77 contacts Zn(2+). Residues D78 and D80 each coordinate Mg(2+). C97 and C104 together coordinate Zn(2+).

The protein belongs to the PRA-CH family. As to quaternary structure, homodimer. Mg(2+) is required as a cofactor. Requires Zn(2+) as cofactor.

The protein resides in the cytoplasm. The enzyme catalyses 1-(5-phospho-beta-D-ribosyl)-5'-AMP + H2O = 1-(5-phospho-beta-D-ribosyl)-5-[(5-phospho-beta-D-ribosylamino)methylideneamino]imidazole-4-carboxamide. It functions in the pathway amino-acid biosynthesis; L-histidine biosynthesis; L-histidine from 5-phospho-alpha-D-ribose 1-diphosphate: step 3/9. Its function is as follows. Catalyzes the hydrolysis of the adenine ring of phosphoribosyl-AMP. This Methylibium petroleiphilum (strain ATCC BAA-1232 / LMG 22953 / PM1) protein is Phosphoribosyl-AMP cyclohydrolase.